The primary structure comprises 376 residues: MFPRPLTPLAAPKSAETLGRTPRRAPLGRARAGLGGPPLLLPSMLMFAVIVASSGLLLMIERGILSEMKPLPLHPPSHKGAAWSGTDPKPRGLSLDAGDSDLQVREDIRNRTLRAVCGQPGMPRDPWDLPVGQRRTLLRHILVSDRYRFLYCYVPKVACSNWKRVLKVLAGILNNVDVRLKMDHRSDLVFLADLRPEEIRYRLQHYFKFLFVRDPLERLLSAYRNKFGEIREYQQRYGAEIVRRYRAGAGPSPAGDDVTFPEFLRYLVDEDPEHMNEHWMPVYHLCQPCAVHYDFVGSYERLEADANQVLEWVRAPPHVRFPARQAWYRPASPESLHYHLCNVPRALLQDVLPKYILDFSLFAYPLPNVTKEACHQ.

Residues 1–30 (MFPRPLTPLAAPKSAETLGRTPRRAPLGRA) are disordered. Topologically, residues 1–39 (MFPRPLTPLAAPKSAETLGRTPRRAPLGRARAGLGGPPL) are cytoplasmic. Residues 18–30 (LGRTPRRAPLGRA) are compositionally biased toward low complexity. Residues 40-60 (LLPSMLMFAVIVASSGLLLMI) form a helical; Signal-anchor for type II membrane protein membrane-spanning segment. Residues 61–376 (ERGILSEMKP…PNVTKEACHQ (316 aa)) lie on the Lumenal side of the membrane. The interval 76-96 (PSHKGAAWSGTDPKPRGLSLD) is disordered. An N-linked (GlcNAc...) asparagine glycan is attached at Asn-110. Residues 155–161 (PKVACSN) and 213–221 (RDPLERLLS) each bind 3'-phosphoadenylyl sulfate. An N-linked (GlcNAc...) asparagine glycan is attached at Asn-368.

This sequence belongs to the sulfotransferase 2 family.

It is found in the golgi apparatus membrane. It carries out the reaction dermatan + n 3'-phosphoadenylyl sulfate = dermatan 4'-sulfate + n adenosine 3',5'-bisphosphate + n H(+). Its function is as follows. Catalyzes the transfer of sulfate to position 4 of the N-acetylgalactosamine (GalNAc) residue of dermatan sulfate. Plays a pivotal role in the formation of 4-0-sulfated IdoA blocks in dermatan sulfate. Transfers sulfate to the C-4 hydroxyl of beta1,4-linked GalNAc that is substituted with an alpha-linked iduronic acid (IdoUA) at the C-3 hydroxyl. Transfers sulfate more efficiently to GalNAc residues in -IdoUA-GalNAc-IdoUA- than in -GlcUA-GalNAc-GlcUA-sequences. Has preference for partially desulfated dermatan sulfate. Addition of sulfate to GalNAc may occur immediately after epimerization of GlcUA to IdoUA. Appears to have an important role in the formation of the cerebellar neural network during postnatal brain development. In Mus musculus (Mouse), this protein is Carbohydrate sulfotransferase 14 (Chst14).